A 241-amino-acid polypeptide reads, in one-letter code: Xyloglucan-specific endo-beta-1,4-glucanase 1 (241 aa).

Positions 1-19 (MKGLLAGTIAAATFAVASA) are cleaved as a signal peptide. Glu136 is an active-site residue. Asn174 and Asn190 each carry an N-linked (GlcNAc...) asparagine glycan. Residue Glu222 is part of the active site.

It belongs to the glycosyl hydrolase 12 (cellulase H) family. Interacts with host apoplastic glucanase inhibitor GIP2.

It carries out the reaction xyloglucan + H2O = xyloglucan oligosaccharides.. The xyloglucanase activity is inhibited by the binding of the host apoplastic glucanase inhibitor GIP2. Glycoside hydrolase that exhibits xyloglucanase activity. Acts as an important virulence factor during P.parasitica infection of its host Nicotiana benthamiana. Also acts as a pathogen-associated molecular pattern (PAMP) in host species, where it can trigger defense responses including cell death. The PAMP activity is independent of its xyloglucanase activity. With paralog XLP1, is required to elevate apoplastic sugar during P.parasitica infection. The chain is Xyloglucan-specific endo-beta-1,4-glucanase 1 from Phytophthora nicotianae (strain INRA-310) (Phytophthora parasitica).